A 262-amino-acid polypeptide reads, in one-letter code: uncharacterized protein (262 aa).

This is an uncharacterized protein from Bacillus subtilis (strain 168).